The primary structure comprises 330 residues: Beta-ketoacyl-[acyl-carrier-protein] synthase III (330 aa).

Residues C111 and H249 contribute to the active site. The tract at residues 250–254 (QANTR) is ACP-binding. N279 is a catalytic residue.

This sequence belongs to the thiolase-like superfamily. FabH family. Homodimer.

Its subcellular location is the cytoplasm. The enzyme catalyses malonyl-[ACP] + acetyl-CoA + H(+) = 3-oxobutanoyl-[ACP] + CO2 + CoA. It functions in the pathway lipid metabolism; fatty acid biosynthesis. Its function is as follows. Catalyzes the condensation reaction of fatty acid synthesis by the addition to an acyl acceptor of two carbons from malonyl-ACP. Catalyzes the first condensation reaction which initiates fatty acid synthesis and may therefore play a role in governing the total rate of fatty acid production. Possesses both acetoacetyl-ACP synthase and acetyl transacylase activities. Its substrate specificity determines the biosynthesis of branched-chain and/or straight-chain of fatty acids. This Pseudomonas aeruginosa (strain LESB58) protein is Beta-ketoacyl-[acyl-carrier-protein] synthase III.